The primary structure comprises 328 residues: Serine protease 27 (328 aa).

Residues 1 to 22 form the signal peptide; that stretch reads MRQPHIAALLLLPLLLRSGTEG. Residues 23-37 constitute a propeptide, activation peptide; the sequence is ARTLRACGHPKMFNR. A Peptidase S1 domain is found at 38–280; the sequence is MVGGENALEG…HHKWIHQIIP (243 aa). The cysteines at positions 63 and 79 are disulfide-linked. The Charge relay system role is filled by His78. N-linked (GlcNAc...) asparagine glycosylation is present at Asn82. Asp127 serves as the catalytic Charge relay system. Disulfide bonds link Cys161–Cys238, Cys194–Cys217, and Cys228–Cys256. Residue Ser232 is the Charge relay system of the active site.

Belongs to the peptidase S1 family.

It localises to the secreted. The chain is Serine protease 27 (Prss27) from Mus musculus (Mouse).